The sequence spans 435 residues: Citrate synthase (435 aa).

Residues His-311 and Asp-370 contribute to the active site.

It belongs to the citrate synthase family. Homohexamer.

It carries out the reaction oxaloacetate + acetyl-CoA + H2O = citrate + CoA + H(+). It functions in the pathway carbohydrate metabolism; tricarboxylic acid cycle; isocitrate from oxaloacetate: step 1/2. This is Citrate synthase (gltA) from Rickettsia africae (strain ESF-5).